The following is a 394-amino-acid chain: Putative serine protease HhoA (394 aa).

The N-terminal stretch at 1–24 is a signal peptide; sequence MKYPTWLRRIGGYLLAFAVGTAFG. A PDZ domain is found at 293-377; sequence MMNITVDQAQ…ALKLDLLRGD (85 aa).

This sequence belongs to the peptidase S1C family.

Its subcellular location is the periplasm. Its function is as follows. A putative protease, its function overlaps that of the related putative proteases HhoB and HtrA. The protein is Putative serine protease HhoA (hhoA) of Synechocystis sp. (strain ATCC 27184 / PCC 6803 / Kazusa).